We begin with the raw amino-acid sequence, 410 residues long: Angiopoietin-related protein 4 (410 aa).

The signal sequence occupies residues 1–23 (MRCAPTAGAALMLCAATAGLLSA). Residues 81 to 106 (KDPEGSAAPPRAQANLVNPGGGDASP) form a disordered region. Residues 107-155 (ETLRSLKTQLEAQNSRIQQLFQKVAQQQRHLEKQQLRIQNLQSQMDHLA) adopt a coiled-coil conformation. N-linked (GlcNAc...) asparagine glycosylation is present at N184. Residues 186 to 408 (SRLHRLPRDC…ATTILVQPTA (223 aa)) form the Fibrinogen C-terminal domain. 2 cysteine pairs are disulfide-bonded: C195–C223 and C348–C361.

Homooligomer; disulfide-linked via Cys residues in the N-terminal part of the protein. The homooligomer undergoes proteolytic processing to release the ANGPTL4 C-terminal chain, which circulates as a monomer. The homooligomer unprocessed form is able to interact with the extracellular matrix. N-glycosylated. In terms of processing, forms disulfide-linked dimers and tetramers. Post-translationally, cleaved into a smaller N-terminal chain and a larger chain that contains the fibrinogen C-terminal domain; both cleaved and uncleaved forms are detected in the extracellular space. The cleaved form is not present within the cell.

The protein localises to the secreted. Its subcellular location is the extracellular space. It localises to the extracellular matrix. In terms of biological role, mediates inactivation of the lipoprotein lipase LPL, and thereby plays a role in the regulation of triglyceride clearance from the blood serum and in lipid metabolism. May also play a role in regulating glucose homeostasis and insulin sensitivity. Inhibits proliferation, migration, and tubule formation of endothelial cells and reduces vascular leakage. Upon heterologous expression, inhibits the adhesion of endothelial cell to the extracellular matrix (ECM), and inhibits the reorganization of the actin cytoskeleton, formation of actin stress fibers and focal adhesions in endothelial cells that have adhered to ANGPTL4-containing ECM (in vitro). Depending on context, may modulate tumor-related angiogenesis. Mediates inactivation of the lipoprotein lipase LPL, and thereby plays an important role in the regulation of triglyceride clearance from the blood serum and in lipid metabolism. Has higher activity in LPL inactivation than the uncleaved protein. In Bos taurus (Bovine), this protein is Angiopoietin-related protein 4 (ANGPTL4).